Here is a 383-residue protein sequence, read N- to C-terminus: Ovalbumin (383 aa).

Residue Gly2 is modified to N-acetylglycine. The not cleaved signal peptide spans 22-48 (HHANDNMLYSPFAILSTLAMVFLGAKD). The residue at position 69 (Ser69) is a Phosphoserine. Cysteines 74 and 121 form a disulfide. Asn293 and Asn312 each carry an N-linked (GlcNAc...) asparagine glycan. Ser345 carries the phosphoserine modification.

It belongs to the serpin family. Ov-serpin subfamily. Post-translationally, the signal sequence is not cleaved. The functional signal for membrane translocation of ovalbumin becomes accessible when the nascent chain is 50 to 60 residues long. The hydrophobic sequence which lies between residues 27 and 43 folds back on the preceding residues to form an amphipathic hairpin structure which is the signal element recognized by the membrane. As to expression, major protein of egg white.

It is found in the secreted. Its function is as follows. Storage protein of egg white. Lack protease inhibitory activity. The chain is Ovalbumin (SERPINB14) from Coturnix japonica (Japanese quail).